The following is a 259-amino-acid chain: Borneol dehydrogenase, mitochondrial (259 aa).

A mitochondrion-targeting transit peptide spans 1–30; it reads MASTVLRRLEGKVALITGAASGIGESAARL. NAD(+)-binding positions include 21 to 23, Asp-42, 63 to 64, and 90 to 92; these read SGI, DV, and NAG. The active-site Proton donor is the Ser-144. 2 residues coordinate substrate: Ser-144 and Tyr-157. The NAD(+) site is built by Tyr-157, Lys-161, and Thr-192. The Proton acceptor role is filled by Tyr-157. Lys-161 acts as the Proton donor/acceptor in catalysis.

It belongs to the short-chain dehydrogenases/reductases (SDR) family. In terms of tissue distribution, specifically expressed in glandular trichomes of mature flowers.

The protein resides in the mitochondrion. The catalysed reaction is borneol + NAD(+) = camphor + NADH + H(+). Its pathway is secondary metabolite biosynthesis; terpenoid biosynthesis. Involved in the biosynthesis of monoterpenes natural products related to camphor. Catalyzes the conversion of borneol into camphor. The chain is Borneol dehydrogenase, mitochondrial from Lavandula x intermedia (Lavandin).